The sequence spans 432 residues: Muscle cell intermediate filament protein OV71 (432 aa).

The segment at Lys-1–Leu-111 is coil 1B. One can recognise an IF rod domain in the interval Lys-1–Ala-277. The linker 12 stretch occupies residues Gln-112–Lys-128. The tract at residues Asn-129–Ala-277 is coil 2. Positions Gly-278 to Ser-432 are tail. The LTD domain maps to Ser-310–Ser-427.

The protein belongs to the intermediate filament family.

In Onchocerca volvulus, this protein is Muscle cell intermediate filament protein OV71 (OV71).